The sequence spans 297 residues: T-cell leukemia homeobox protein 1 (297 aa).

A disordered region spans residues 153–174 (DRFTGHPYQNRTPPKKKKPRTS). Residues 168–227 (KKKPRTSFTRLQICELEKRFHRQKYLASAERAALAKALKMTDAQVKTWFQNRRTKWRRQT) constitute a DNA-binding region (homeobox).

The protein localises to the nucleus. Its function is as follows. Seems to be involved in the development of cranial sensory innervation from peripheral ganglia. This Gallus gallus (Chicken) protein is T-cell leukemia homeobox protein 1 (TLX1).